Consider the following 358-residue polypeptide: Oligopeptide transport ATP-binding protein OppD (358 aa).

An ABC transporter domain is found at 8–259 (LEVKDLAISF…PRHPYTWGLL (252 aa)). ATP is bound at residue 44-51 (GESGSGKS).

The protein belongs to the ABC transporter superfamily. In terms of assembly, the complex is composed of two ATP-binding proteins (OppD and OppF), two transmembrane proteins (OppB and OppC) and a solute-binding protein (OppA).

It localises to the cell membrane. The catalysed reaction is a [peptide](out) + ATP + H2O = a [peptide](in) + ADP + phosphate + H(+). Its function is as follows. Part of the ABC transporter complex OppABCDF involved in the uptake of oligopeptides. Probably responsible for energy coupling to the transport system. Required for sporulation and genetic competence. The protein is Oligopeptide transport ATP-binding protein OppD of Bacillus subtilis (strain 168).